The primary structure comprises 565 residues: uncharacterized protein (565 aa).

5 consecutive transmembrane segments (helical) span residues 14 to 34 (LAIF…IGKF), 36 to 56 (LGVV…DITV), 92 to 112 (MGFA…LAKI), 117 to 137 (VGEA…IGVA), and 157 to 177 (IIPV…AWVL). One can recognise an RCK C-terminal domain in the interval 296–381 (PEVLDPQLLD…VDAAAKQLGY (86 aa)). The next 6 membrane-spanning stretches (helical) occupy residues 391 to 411 (MIFV…SIHM), 414 to 434 (VPIS…FGWL), 448 to 468 (ALWI…GIAA), 481 to 501 (LSLF…GILM), 508 to 530 (FHPA…LGAI), and 545 to 565 (VTYA…VLLM).

It belongs to the AAE transporter (TC 2.A.81) family.

Its subcellular location is the cell membrane. This is an uncharacterized protein from Bacteroides fragilis (strain YCH46).